Consider the following 142-residue polypeptide: Hemoglobin subunit alpha-2 (142 aa).

A Globin domain is found at 2-142; that stretch reads LLTADDKKHI…VSSVLTSKYR (141 aa). Histidine 59 provides a ligand contact to O2. Histidine 88 is a heme b binding site.

It belongs to the globin family. Heterotetramer of two alpha chains and two beta chains. Red blood cells.

In terms of biological role, involved in oxygen transport from the lung to the various peripheral tissues. The protein is Hemoglobin subunit alpha-2 (hba2) of Xenopus borealis (Kenyan clawed frog).